The primary structure comprises 156 residues: UPF0232 protein BL0636 (156 aa).

Belongs to the UPF0232 family.

This is UPF0232 protein BL0636 from Bifidobacterium longum (strain NCC 2705).